Consider the following 239-residue polypeptide: Demethylmenaquinone methyltransferase (239 aa).

S-adenosyl-L-methionine contacts are provided by residues T68, D86, and 111 to 112; that span reads NG.

It belongs to the class I-like SAM-binding methyltransferase superfamily. MenG/UbiE family.

The catalysed reaction is a 2-demethylmenaquinol + S-adenosyl-L-methionine = a menaquinol + S-adenosyl-L-homocysteine + H(+). Its pathway is quinol/quinone metabolism; menaquinone biosynthesis; menaquinol from 1,4-dihydroxy-2-naphthoate: step 2/2. Its function is as follows. Methyltransferase required for the conversion of demethylmenaquinol (DMKH2) to menaquinol (MKH2). The sequence is that of Demethylmenaquinone methyltransferase from Tropheryma whipplei (strain TW08/27) (Whipple's bacillus).